The following is a 262-amino-acid chain: LOB domain-containing protein 18 (262 aa).

Residues 36 to 138 (GPCGACKFLR…AEVSYLQAHL (103 aa)) enclose the LOB domain. The segment at 223-262 (VGLGGENSHDLQALAHELLHRQGSPPPAATDHSPSRTMSR) is disordered.

Belongs to the LOB domain-containing protein family. In terms of assembly, homodimer and heterodimer with LBD16. Interacts with GIP1. As to expression, expressed in roots, stems, leaves and flowers. Expressed in vascular tissues of hypocotyls, leaves, roots, developing floral organs and siliques.

It localises to the nucleus. Its function is as follows. Involved in the positive regulation of tracheary element (TE) differentiation. Involved in a positive feedback loop that maintains or promotes NAC030/VND7 expression that regulates TE differentiation-related genes. Functions in the initiation and emergence of lateral roots, in conjunction with LBD16, downstream of ARF7 and ARF19. Transcriptional activator that directly regulates EXPA14, a gene encoding a cell wall-loosening factor that promotes lateral root emergence. Activates EXPA14 by directly binding to a specific region of its promoter. Transcriptional activator that directly regulates EXPA17, a gene encoding a cell wall-loosening factor that promotes lateral root emergence. Acts downstream of the auxin influx carriers AUX1 and LAX1 in the regulation of lateral root initiation and development. This Arabidopsis thaliana (Mouse-ear cress) protein is LOB domain-containing protein 18 (LBD18).